Here is a 149-residue protein sequence, read N- to C-terminus: Transcriptional repressor NrdR (149 aa).

The segment at 3–34 (CPFCGHAATQVIDTRMSEEGDTVRRRRRCESC) is a zinc-finger region. Positions 49–139 (PAVVKKNGSR…VYRSFEDVSE (91 aa)) constitute an ATP-cone domain.

Belongs to the NrdR family. Zn(2+) serves as cofactor.

Negatively regulates transcription of bacterial ribonucleotide reductase nrd genes and operons by binding to NrdR-boxes. The chain is Transcriptional repressor NrdR from Ralstonia nicotianae (strain ATCC BAA-1114 / GMI1000) (Ralstonia solanacearum).